A 565-amino-acid chain; its full sequence is 2-isopropylmalate synthase (565 aa).

The 276-residue stretch at 37-312 (PRWCSVDLRD…DPMIDLSDID (276 aa)) folds into the Pyruvate carboxyltransferase domain. 4 residues coordinate Mg(2+): Asp46, His251, His253, and Asn287. The segment at 446–565 (EGGDPAASLE…SAVNRASRES (120 aa)) is regulatory domain.

Belongs to the alpha-IPM synthase/homocitrate synthase family. LeuA type 2 subfamily. In terms of assembly, homodimer. Mg(2+) serves as cofactor.

Its subcellular location is the cytoplasm. The enzyme catalyses 3-methyl-2-oxobutanoate + acetyl-CoA + H2O = (2S)-2-isopropylmalate + CoA + H(+). It functions in the pathway amino-acid biosynthesis; L-leucine biosynthesis; L-leucine from 3-methyl-2-oxobutanoate: step 1/4. In terms of biological role, catalyzes the condensation of the acetyl group of acetyl-CoA with 3-methyl-2-oxobutanoate (2-ketoisovalerate) to form 3-carboxy-3-hydroxy-4-methylpentanoate (2-isopropylmalate). The polypeptide is 2-isopropylmalate synthase (Parafrankia sp. (strain EAN1pec)).